A 24-amino-acid polypeptide reads, in one-letter code: Humanin-like 13 (24 aa).

It belongs to the humanin family.

It localises to the secreted. It is found in the cytoplasm. In terms of biological role, plays a role as a neuroprotective and antiapoptotic factor. The protein is Humanin-like 13 of Homo sapiens (Human).